The following is a 298-amino-acid chain: tRNA pseudouridine synthase B (298 aa).

D45 acts as the Nucleophile in catalysis.

It belongs to the pseudouridine synthase TruB family. Type 1 subfamily.

The enzyme catalyses uridine(55) in tRNA = pseudouridine(55) in tRNA. In terms of biological role, responsible for synthesis of pseudouridine from uracil-55 in the psi GC loop of transfer RNAs. This is tRNA pseudouridine synthase B from Thiobacillus denitrificans (strain ATCC 25259 / T1).